The chain runs to 247 residues: MyoD family inhibitor domain-containing protein (247 aa).

Disordered stretches follow at residues 1 to 67 and 80 to 110; these read MSCA…NPSA and QLQTSAQEPGKEETGKIKNGGHTRMSNGNGI. The region spanning 74–247 is the MDFI domain; that stretch reads QPERLPQLQT…MECCGICFPS (174 aa). Residues Ser-129 and Ser-141 each carry the phosphoserine modification.

The protein belongs to the MDFI family. In terms of assembly, interacts with HAND1; the interaction sequesters Hand1 into the nucleolus and inhibits its activity. Interacts (via C-terminus) with ZIC2. Interacts (via C-terminus) with AXIN1, the histidine-rich region of CCNT1/cyclin-T and weakly with LEF1. Interacts with CCNT2. Interacts with GATA2. Interacts (via C-terminus) with Piezo channel composed of PIEZO1 or PIEZO2; the interaction prolongs Piezo channel inactivation. In terms of processing, palmitoylated. As to expression, in the embryo, robust expression is detected between 16.5 and 18.5 dpc in lung, kidney, and salivary glands. In the developing cardiovascular system, it is detected in lymphatic and cardiac valves (at protein level).

Its subcellular location is the cytoplasm. The protein resides in the secreted. Required to control the activity of various transcription factors through their sequestration in the cytoplasm. Retains nuclear Zic proteins ZIC1, ZIC2 and ZIC3 in the cytoplasm and inhibits their transcriptional activation. Modulates the expression from cellular promoters. Binds to the axin complex, resulting in an increase in the level of free beta-catenin. Affects axin-regulation of the WNT and JNK signaling pathways. Involved in the development of lymphatic vessel valves. Required to promote lymphatic endothelial cell migration, in a process that involves down-regulation of integrin beta 1 activation and control of cell adhesion to the extracellular matrix. Regulates the activity of mechanosensitive Piezo channel. The protein is MyoD family inhibitor domain-containing protein of Mus musculus (Mouse).